The sequence spans 840 residues: Lysine-specific demethylase JMJ27 (840 aa).

Residues 1–10 (MEKMRGKRIR) are compositionally biased toward basic residues. Positions 1–52 (MEKMRGKRIRPRDSGELVEDGRSESERKTRKKENDVVSKGRIGRGRGRGEVS) are disordered. The span at 11 to 38 (PRDSGELVEDGRSESERKTRKKENDVVS) shows a compositional bias: basic and acidic residues. Positions 80, 83, 95, 98, 104, 107, 124, and 127 each coordinate Zn(2+). Residues 80 to 127 (CHHCKILTSESDLIFCSKCNKKCYCFDCIKRSYSERTHEEVRAACPFC) form an RING-type; degenerate zinc finger. Residues 502 to 798 (PKSGILNLAT…ECLRLTQEFR (297 aa)) form the JmjC domain. Fe cation contacts are provided by His-546 and Asp-548. Residues 594–678 (KEASELENKS…ETDGNTNERS (85 aa)) form a disordered region. Over residues 595 to 620 (EASELENKSMKEVDESKKDLKDKAAN) the composition is skewed to basic and acidic residues. Positions 621 to 631 (EEQSNNSSRPS) are enriched in polar residues. Residues 635 to 646 (EAEKVIISKEDN) are compositionally biased toward basic and acidic residues. The segment covering 647 to 659 (PTQPAVSTSVESI) has biased composition (polar residues). The span at 660-678 (QEQKLDAPKETDGNTNERS) shows a compositional bias: basic and acidic residues. Position 766 (His-766) interacts with Fe cation.

This sequence belongs to the JARID1 histone demethylase family. As to quaternary structure, interacts with RPN1A. Requires Fe(2+) as cofactor. As to expression, expressed in seedlings, inflorescences, flowers and siliques, and, at low levels, in roots, leaves (including vascular bundles) and stems. Particularly observed in stomatal guard cells.

It localises to the nucleus. The protein localises to the cytoplasm. The catalysed reaction is N(6),N(6)-dimethyl-L-lysyl(9)-[histone H3] + 2-oxoglutarate + O2 = N(6)-methyl-L-lysyl(9)-[histone H3] + formaldehyde + succinate + CO2. It catalyses the reaction N(6)-methyl-L-lysyl(9)-[histone H3] + 2-oxoglutarate + O2 = L-lysyl(9)-[histone H3] + formaldehyde + succinate + CO2. The enzyme catalyses N(6),N(6)-dimethyl-L-lysyl(9)-[histone H3] + 2 2-oxoglutarate + 2 O2 = L-lysyl(9)-[histone H3] + 2 formaldehyde + 2 succinate + 2 CO2. In terms of biological role, histone demethylase that demethylates 'Lys-9' (H3K9me) of histone H3 with a specific activity for H3K9me1 and H3K9me2. No activity on H3K4, H3K27, H3K36, H3R2 and H4R3 methyl marks, but weak activity on H3K9me3. Involved in regulation of gene expression. Regulates flowering time by repressing the major flowering regulator CONSTANS (CO) and promoting FLOWERING LOCUS C (FLC). Exhibits a positive impact on abscisic acid- (ABA), hydrogen peroxide- (H(2)O(2)) and calcium- (Ca(2+)) induced stomatal closure. Promotes stomatal-closure-dependent drought-stress responses through its histone demethylase activity toward at least GOLS2 and RD20 loci, thus protecting them from silencing by removing H3K9me2 marks in drought conditions. Required for plant defenses leading to resistance against the virulent bacterial pathogen Pseudomonas syringae pv. tomato DC3000 (Pst DC3000) via a negative regulation of WRKY25 (a repressor of defense) and by triggering the expression of several pathogenesis-related (PR) proteins (e.g. PR1, PR3, PR4 and PR5). The chain is Lysine-specific demethylase JMJ27 from Arabidopsis thaliana (Mouse-ear cress).